Reading from the N-terminus, the 288-residue chain is Ninja-family protein 6 (288 aa).

Disordered stretches follow at residues 1 to 50 and 66 to 207; these read MASR…KRPR and LHAD…TRTG. The segment covering 12-23 has biased composition (gly residues); that stretch reads AGEGAGPPGDAG. Residues 76 to 86 are compositionally biased toward low complexity; it reads LPLLRTTSLPT. Basic and acidic residues predominate over residues 91–103; it reads ERWRRREMQSRRR. The span at 131–173 shows a compositional bias: polar residues; that stretch reads RRSNASQGSNSASTTEQGIGGSMFNQSADAKSPSTSDNRNQND. Residues 195–207 show a composition bias toward low complexity; sequence RLRTLGSLTTRTG.

This sequence belongs to the Ninja family.

Its subcellular location is the nucleus. The polypeptide is Ninja-family protein 6 (Zea mays (Maize)).